The chain runs to 524 residues: Cytokinin dehydrogenase 4 (524 aa).

An N-terminal signal peptide occupies residues 1–26; it reads MTNTLCLSLITLITLFISLTPTLIKS. N-linked (GlcNAc...) asparagine glycans are attached at residues Asn-39 and Asn-58. An FAD-binding PCMH-type domain is found at 60 to 249; the sequence is TDENPGAVLC…TRARIALDHA (190 aa). FAD contacts are provided by Ala-104, Gly-106, and Gly-108. The residue at position 109 (His-109) is a Pros-8alpha-FAD histidine. Residues Ser-110 and Gln-114 each coordinate FAD. N-linked (GlcNAc...) asparagine glycosylation occurs at Asn-124. FAD is bound by residues Asp-173, Ser-178, Ser-184, Ile-188, and Ile-239. A glycan (N-linked (GlcNAc...) asparagine) is linked at Asn-411. Residues Tyr-482, Ser-517, and Gln-520 each coordinate FAD.

It belongs to the oxygen-dependent FAD-linked oxidoreductase family. FAD is required as a cofactor. Expressed in trichomes and in developing stomata of young growing leaves. Strong expression in stipules and in the root cap, but not detected in the root meristem.

Its subcellular location is the secreted. The protein localises to the extracellular space. It carries out the reaction N(6)-dimethylallyladenine + A + H2O = 3-methyl-2-butenal + adenine + AH2. In terms of biological role, catalyzes the oxidation of cytokinins, a family of N(6)-substituted adenine derivatives that are plant hormones, where the substituent is an isopentenyl group. This Arabidopsis thaliana (Mouse-ear cress) protein is Cytokinin dehydrogenase 4 (CKX4).